The sequence spans 362 residues: MSKILQFQLQHFRNIEQASLTFGEGLNLIVGDNAAGKTALIEAIWTLASGRSFRTAKPHQLIQQNQSELVLFGTLTEADRIHKIGLARTSDKVTLKIDGELAKTQADMSAKLPVQLLTPESHRLLEEGPKARRQFMDWGCFHHNADFIHLWRHYQRALKQRNHALKKRLPASQIQLWDAQLVDAAEKIDVIRADYITRLTPYLVEFCQALMPEITVSPECHYRPGWPKTAESYRQLLADNFAKDTLQGHTQYGSHRADIKFRFNGQEALMILSRGQQKLFVCALLLAQATLYQQHSQNPVIMLIDDLPAELDAKHRETLLKLLNLLDIQHILTSTAQDLIPVLEPEKAKIWRIQHGELIEQQ.

ATP is bound at residue 31–38; the sequence is GDNAAGKT.

The protein belongs to the RecF family.

It localises to the cytoplasm. The RecF protein is involved in DNA metabolism; it is required for DNA replication and normal SOS inducibility. RecF binds preferentially to single-stranded, linear DNA. It also seems to bind ATP. In Hydrogenovibrio crunogenus (strain DSM 25203 / XCL-2) (Thiomicrospira crunogena), this protein is DNA replication and repair protein RecF.